The primary structure comprises 578 residues: Peptidyl-prolyl cis-trans isomerase-like 2 (578 aa).

A U-box domain is found at 40 to 114 (RRLPFNFCAA…SDSLGAGLSD (75 aa)). The segment at 240–260 (KAREQGGDVNRSSTALTKPTG) is disordered. The 155-residue stretch at 321-475 (ATGFARMETN…NKILIKDIVI (155 aa)) folds into the PPIase cyclophilin-type domain. The tract at residues 505 to 578 (GTDDDKTTWT…GGGFGNFDNW (74 aa)) is disordered. A compositionally biased stretch (polar residues) spans 538 to 548 (KTTTQQSTPTV). Residues 551–560 (ADLEDVDTWE) show a composition bias toward acidic residues. Positions 569–578 (GGGFGNFDNW) are enriched in gly residues.

The protein belongs to the cyclophilin-type PPIase family. PPIL2 subfamily.

It localises to the nucleus. It catalyses the reaction [protein]-peptidylproline (omega=180) = [protein]-peptidylproline (omega=0). The catalysed reaction is S-ubiquitinyl-[E2 ubiquitin-conjugating enzyme]-L-cysteine + [acceptor protein]-L-lysine = [E2 ubiquitin-conjugating enzyme]-L-cysteine + N(6)-ubiquitinyl-[acceptor protein]-L-lysine.. It functions in the pathway protein modification; protein ubiquitination. Functionally, may catalyze the cis-trans isomerization of proline imidic peptide bonds in oligopeptides thereby assisting the folding of proteins. May also function as a chaperone, playing a role in intracellular transport of proteins. May also have a protein ubiquitin ligase activity acting as an E3 ubiquitin protein ligase or as a ubiquitin-ubiquitin ligase promoting elongation of ubiquitin chains on proteins. The polypeptide is Peptidyl-prolyl cis-trans isomerase-like 2 (CYP8) (Gibberella zeae (strain ATCC MYA-4620 / CBS 123657 / FGSC 9075 / NRRL 31084 / PH-1) (Wheat head blight fungus)).